The primary structure comprises 248 residues: Ribosomal RNA small subunit methyltransferase J (248 aa).

S-adenosyl-L-methionine contacts are provided by residues 98–99 (RD), 114–115 (ER), 150–151 (SS), and D168.

This sequence belongs to the methyltransferase superfamily. RsmJ family.

The protein localises to the cytoplasm. It catalyses the reaction guanosine(1516) in 16S rRNA + S-adenosyl-L-methionine = N(2)-methylguanosine(1516) in 16S rRNA + S-adenosyl-L-homocysteine + H(+). Functionally, specifically methylates the guanosine in position 1516 of 16S rRNA. The chain is Ribosomal RNA small subunit methyltransferase J from Shewanella denitrificans (strain OS217 / ATCC BAA-1090 / DSM 15013).